The chain runs to 62 residues: uncharacterized protein (62 aa).

Positions 1–22 (MVNVALLLDQIIATPLRSMVEA) are cleaved as a signal peptide.

This is an uncharacterized protein from Archaeoglobus fulgidus (strain ATCC 49558 / DSM 4304 / JCM 9628 / NBRC 100126 / VC-16).